A 314-amino-acid chain; its full sequence is MSKPLRIVFAGTPDFAARHLAALLSSQHEVIAVYTQPDRPAGRGKKLTASPVKNIALENDLPVYQPASLRNEDAQQELAALKADIMVVVAYGLLLPKFVLDTPKLGCINVHGSILPRWRGAAPIQRSIWAGDEETGVTIMQMDEGLDTGDMLTIATLPIEPTDTSATMYDKLAGLGPNALIDCLSEISAGTAIAEKQNDELANYAKKLNKEEAKIDWAMEATAIERCIRAFNPWPMSYFAVAEQNVKVWHAVVEAENQGKAPGTILSADKQGITVATGKGALRLIELQPPGKKAMKAQDILNSRREWFELGTQL.

113–116 (SILP) lines the (6S)-5,6,7,8-tetrahydrofolate pocket.

It belongs to the Fmt family.

The enzyme catalyses L-methionyl-tRNA(fMet) + (6R)-10-formyltetrahydrofolate = N-formyl-L-methionyl-tRNA(fMet) + (6S)-5,6,7,8-tetrahydrofolate + H(+). Attaches a formyl group to the free amino group of methionyl-tRNA(fMet). The formyl group appears to play a dual role in the initiator identity of N-formylmethionyl-tRNA by promoting its recognition by IF2 and preventing the misappropriation of this tRNA by the elongation apparatus. This is Methionyl-tRNA formyltransferase from Photobacterium profundum (strain SS9).